The chain runs to 126 residues: Fluoride-specific ion channel FluC 1 (126 aa).

4 consecutive transmembrane segments (helical) span residues 1-21 (MAGS…GAWL), 38-58 (WGTF…LALY), 67-87 (LALL…TFAV), and 99-119 (FVSL…AGVG). G77 and S80 together coordinate Na(+).

This sequence belongs to the fluoride channel Fluc/FEX (TC 1.A.43) family.

It localises to the cell inner membrane. It catalyses the reaction fluoride(in) = fluoride(out). Its activity is regulated as follows. Na(+) is not transported, but it plays an essential structural role and its presence is essential for fluoride channel function. Fluoride-specific ion channel. Important for reducing fluoride concentration in the cell, thus reducing its toxicity. This Synechococcus sp. (strain CC9902) protein is Fluoride-specific ion channel FluC 1.